We begin with the raw amino-acid sequence, 795 residues long: Phenylalanine--tRNA ligase beta subunit (795 aa).

The tRNA-binding domain occupies 39 to 148 (AGRFTGVVVG…AEAPIGQDIR (110 aa)). A B5 domain is found at 401 to 476 (PQPATITLRR…RVYGYDAIPN (76 aa)). Mg(2+) contacts are provided by aspartate 454, aspartate 460, glutamate 463, and glutamate 464. Residues 701–794 (SRFPANRRDI…LKQRFQASLR (94 aa)) form the FDX-ACB domain.

It belongs to the phenylalanyl-tRNA synthetase beta subunit family. Type 1 subfamily. Tetramer of two alpha and two beta subunits. Mg(2+) is required as a cofactor.

The protein resides in the cytoplasm. It catalyses the reaction tRNA(Phe) + L-phenylalanine + ATP = L-phenylalanyl-tRNA(Phe) + AMP + diphosphate + H(+). This is Phenylalanine--tRNA ligase beta subunit from Sodalis glossinidius (strain morsitans).